We begin with the raw amino-acid sequence, 164 residues long: Pyruvoyl-dependent arginine decarboxylase (164 aa).

S52 is subject to Pyruvic acid (Ser).

This sequence belongs to the PdaD family. It depends on pyruvate as a cofactor.

It carries out the reaction L-arginine + H(+) = agmatine + CO2. In Methanococcus maripaludis (strain C6 / ATCC BAA-1332), this protein is Pyruvoyl-dependent arginine decarboxylase.